The chain runs to 187 residues: Peroxisome assembly protein 22 (187 aa).

A helical membrane pass occupies residues 7-29 (NTFFGLAALGALGLGYSVYKSFI).

The protein belongs to the peroxin-22 family. In terms of assembly, interacts with PEX4.

It is found in the peroxisome membrane. Its function is as follows. Involved in peroxisome biogenesis. The protein is Peroxisome assembly protein 22 (PEX22) of Komagataella pastoris (Yeast).